The primary structure comprises 145 residues: Transcriptional regulator MraZ (145 aa).

SpoVT-AbrB domains lie at 5-50 and 81-124; these read TFNH…ALPQ and AHEV…DKAA.

It belongs to the MraZ family. Forms oligomers.

It localises to the cytoplasm. Its subcellular location is the nucleoid. The chain is Transcriptional regulator MraZ from Anaeromyxobacter sp. (strain Fw109-5).